The chain runs to 503 residues: Long-chain-aldehyde dehydrogenase (503 aa).

Residue 218–224 participates in NAD(+) binding; sequence GYGAEVG. Catalysis depends on residues Glu-262 and Cys-301.

The protein belongs to the aldehyde dehydrogenase family. Homotetramer.

The enzyme catalyses a long-chain fatty aldehyde + NAD(+) + H2O = a long-chain fatty acid + NADH + 2 H(+). With respect to regulation, completely inhibited by p-chloromercuribenzoate and N-ethylmaleimide. Strongly inhibited by iodoacetate. Inhibited by Pb(2+), Fe(3+), Ag(+) and Hg(2+) and partially inhibited by several other metal ions Mn(2+), Zn(2+) and Cu(2+). Aldehyde dehydrogenase that shows activity toward n-alkanals (C(4) to C(14)), with a preference for longer carbon chains. The best substrate is tetradecanal. The sequence is that of Long-chain-aldehyde dehydrogenase (ald1) from Acinetobacter sp.